The chain runs to 188 residues: Adenine phosphoribosyltransferase (188 aa).

Belongs to the purine/pyrimidine phosphoribosyltransferase family. As to quaternary structure, homodimer.

Its subcellular location is the cytoplasm. It catalyses the reaction AMP + diphosphate = 5-phospho-alpha-D-ribose 1-diphosphate + adenine. It functions in the pathway purine metabolism; AMP biosynthesis via salvage pathway; AMP from adenine: step 1/1. Catalyzes a salvage reaction resulting in the formation of AMP, that is energically less costly than de novo synthesis. This is Adenine phosphoribosyltransferase from Neisseria meningitidis serogroup A / serotype 4A (strain DSM 15465 / Z2491).